A 623-amino-acid polypeptide reads, in one-letter code: Trehalase (623 aa).

Belongs to the glycosyl hydrolase 15 family. As to quaternary structure, monomer.

The enzyme catalyses alpha,alpha-trehalose + H2O = alpha-D-glucose + beta-D-glucose. It participates in glycan degradation; trehalose degradation; D-glucose from alpha,alpha-trehalose: step 1/1. With respect to regulation, inhibited by validamycin A. In terms of biological role, catalyzes the hydrolysis of alpha,alpha-trehalose into two molecules of D-glucose. In Thermoplasma volcanium (strain ATCC 51530 / DSM 4299 / JCM 9571 / NBRC 15438 / GSS1), this protein is Trehalase.